We begin with the raw amino-acid sequence, 427 residues long: Histidinol dehydrogenase (427 aa).

Residues Ser-232, Gln-254, and His-257 each contribute to the substrate site. Zn(2+) contacts are provided by Gln-254 and His-257. Residues Glu-322 and His-323 each act as proton acceptor in the active site. Substrate is bound by residues His-323, Asp-356, Glu-410, and His-415. Asp-356 contacts Zn(2+). His-415 lines the Zn(2+) pocket.

It belongs to the histidinol dehydrogenase family. It depends on Zn(2+) as a cofactor.

It carries out the reaction L-histidinol + 2 NAD(+) + H2O = L-histidine + 2 NADH + 3 H(+). It functions in the pathway amino-acid biosynthesis; L-histidine biosynthesis; L-histidine from 5-phospho-alpha-D-ribose 1-diphosphate: step 9/9. Catalyzes the sequential NAD-dependent oxidations of L-histidinol to L-histidinaldehyde and then to L-histidine. The polypeptide is Histidinol dehydrogenase (Listeria monocytogenes serovar 1/2a (strain ATCC BAA-679 / EGD-e)).